Reading from the N-terminus, the 224-residue chain is Peroxiredoxin-like 2A (224 aa).

The thioredoxin fold stretch occupies residues 14 to 112 (MWSVGLGAVG…SKLGVPLYAV (99 aa)). Residue selenocysteine 85 is a non-standard amino acid, selenocysteine. Cysteine 88 (redox-active) is an active-site residue.

The protein belongs to the peroxiredoxin-like PRXL2 family. PRXL2A subfamily.

The protein resides in the cytoplasm. Functionally, involved in redox regulation of the cell. Acts as an antioxidant. Inhibits TNFSF11-induced NFKB1 and JUN activation and osteoclast differentiation. May affect bone resorption and help to maintain bone mass. This chain is Peroxiredoxin-like 2A (PRXL2A), found in Gallus gallus (Chicken).